The chain runs to 348 residues: Phosphoribosylformylglycinamidine cyclo-ligase (348 aa).

It belongs to the AIR synthase family.

It localises to the cytoplasm. It carries out the reaction 2-formamido-N(1)-(5-O-phospho-beta-D-ribosyl)acetamidine + ATP = 5-amino-1-(5-phospho-beta-D-ribosyl)imidazole + ADP + phosphate + H(+). It participates in purine metabolism; IMP biosynthesis via de novo pathway; 5-amino-1-(5-phospho-D-ribosyl)imidazole from N(2)-formyl-N(1)-(5-phospho-D-ribosyl)glycinamide: step 2/2. The polypeptide is Phosphoribosylformylglycinamidine cyclo-ligase (Cereibacter sphaeroides (strain KD131 / KCTC 12085) (Rhodobacter sphaeroides)).